A 272-amino-acid polypeptide reads, in one-letter code: Rhomboid-type serine protease B (272 aa).

A run of 6 helical transmembrane segments spans residues 30–50 (LVLL…WSVV), 72–92 (PFIH…TPLL), 103–123 (TAVA…YILV), 133–153 (AVVG…IKTF), 164–184 (TKIP…IFVP), and 186–206 (TSFL…LGYL). The active-site Nucleophile is the Ser-138. Residue His-191 is part of the active site.

Belongs to the peptidase S54 family.

It localises to the membrane. It catalyses the reaction Cleaves type-1 transmembrane domains using a catalytic dyad composed of serine and histidine that are contributed by different transmembrane domains.. Its function is as follows. Rhomboid protease that catalyzes intramembrane proteolysis. Required for transcription factor srbA activation by mediating its release from the membrane and thereby regulating its activity under hypoxic conditions. Essential for iron homeostasis and resistance to azoles such as voriconazole. Required for virulence in murine models of invasive pulmonary aspergillosis (IPA). The sequence is that of Rhomboid-type serine protease B from Aspergillus fumigatus (strain ATCC MYA-4609 / CBS 101355 / FGSC A1100 / Af293) (Neosartorya fumigata).